Consider the following 323-residue polypeptide: GTP 3',8-cyclase (323 aa).

Residues 5 to 228 enclose the Radical SAM core domain; it reads GFGRKVDYLR…TVLRDTSSPA (224 aa). R14 is a GTP binding site. [4Fe-4S] cluster contacts are provided by C21 and C25. Y27 is a binding site for S-adenosyl-L-methionine. C28 provides a ligand contact to [4Fe-4S] cluster. R64 is a GTP binding site. G68 is a binding site for S-adenosyl-L-methionine. T95 contributes to the GTP binding site. S119 is an S-adenosyl-L-methionine binding site. Residue K155 coordinates GTP. An S-adenosyl-L-methionine-binding site is contributed by M189. 2 residues coordinate [4Fe-4S] cluster: C250 and C253. Position 255–257 (255–257) interacts with GTP; that stretch reads RIR. Residue C267 participates in [4Fe-4S] cluster binding. Over residues 302–313 the composition is skewed to basic and acidic residues; sequence KNKWSQKDDNEV. Positions 302–323 are disordered; the sequence is KNKWSQKDDNEVSTRAFYQTGG.

It belongs to the radical SAM superfamily. MoaA family. Monomer and homodimer. The cofactor is [4Fe-4S] cluster.

The catalysed reaction is GTP + AH2 + S-adenosyl-L-methionine = (8S)-3',8-cyclo-7,8-dihydroguanosine 5'-triphosphate + 5'-deoxyadenosine + L-methionine + A + H(+). It participates in cofactor biosynthesis; molybdopterin biosynthesis. Its function is as follows. Catalyzes the cyclization of GTP to (8S)-3',8-cyclo-7,8-dihydroguanosine 5'-triphosphate. In Aliarcobacter butzleri (strain RM4018) (Arcobacter butzleri), this protein is GTP 3',8-cyclase.